The chain runs to 460 residues: Glycine--tRNA ligase (460 aa).

Residues R99 and E162 each coordinate substrate. ATP contacts are provided by residues 194–196, 204–209, 281–282, and 325–328; these read RNE, FRTREF, EL, and GVGR. Residue 209–213 coordinates substrate; it reads FEQME. Position 321–325 (321–325) interacts with substrate; it reads EPAAG.

It belongs to the class-II aminoacyl-tRNA synthetase family. Homodimer.

The protein resides in the cytoplasm. The catalysed reaction is tRNA(Gly) + glycine + ATP = glycyl-tRNA(Gly) + AMP + diphosphate. Catalyzes the attachment of glycine to tRNA(Gly). The polypeptide is Glycine--tRNA ligase (Streptomyces coelicolor (strain ATCC BAA-471 / A3(2) / M145)).